Reading from the N-terminus, the 102-residue chain is Large ribosomal subunit protein uL24 (102 aa).

This sequence belongs to the universal ribosomal protein uL24 family. Part of the 50S ribosomal subunit.

In terms of biological role, one of two assembly initiator proteins, it binds directly to the 5'-end of the 23S rRNA, where it nucleates assembly of the 50S subunit. One of the proteins that surrounds the polypeptide exit tunnel on the outside of the subunit. This is Large ribosomal subunit protein uL24 from Rhizobium rhizogenes (strain K84 / ATCC BAA-868) (Agrobacterium radiobacter).